Consider the following 440-residue polypeptide: Protein arginine N-methyltransferase 2 (440 aa).

The segment at 147–194 (LSSGSEDGDEEMEVQQDDDEEAPQLVSTEDVEPTVEEPKFIPPDAKEK) is disordered. Positions 152–168 (EDGDEEMEVQQDDDEEA) are enriched in acidic residues. The span at 182 to 194 (EEPKFIPPDAKEK) shows a compositional bias: basic and acidic residues. Positions 192-440 (KEKQVTSEEY…RYAVGTSNRL (249 aa)) constitute an RMT2 domain. Residues tyrosine 201, methionine 230, 252–257 (FGMGIV), 273–275 (EAH), 310–311 (WQ), and aspartate 330 contribute to the S-adenosyl-L-methionine site.

It belongs to the class I-like SAM-binding methyltransferase superfamily. RMT2 methyltransferase family. In terms of assembly, monomer.

The protein localises to the cytoplasm. Its subcellular location is the nucleus. In terms of biological role, S-adenosyl-L-methionine-dependent protein-arginine N-methyltransferase that methylates the delta-nitrogen atom of arginine residues to form N5-methylarginine (type IV) in target proteins. Monomethylates ribosomal protein L12. The protein is Protein arginine N-methyltransferase 2 of Gibberella zeae (strain ATCC MYA-4620 / CBS 123657 / FGSC 9075 / NRRL 31084 / PH-1) (Wheat head blight fungus).